Here is a 307-residue protein sequence, read N- to C-terminus: Adenosylcobinamide-GDP ribazoletransferase (307 aa).

Transmembrane regions (helical) follow at residues 22–42, 58–78, 80–100, 137–157, 161–181, 212–232, 248–268, and 283–303; these read PLFEGIFTALNWMTVLPVPGA, PFVGFVFGMFTAIIMWAIGPI, GVIHVDGLLVAVLIVAFWELL, FGLATAMLSVLLQVAAVASLV, VWWMICFIPVLGRIAGQVTAL, TAALAFWCAELISPLSPLTSV, AWLGGWVAITAVVACVFAALF, and CIGACIHLGASISAVMFAVVA.

Belongs to the CobS family. Mg(2+) is required as a cofactor.

It localises to the cell membrane. It catalyses the reaction alpha-ribazole + adenosylcob(III)inamide-GDP = adenosylcob(III)alamin + GMP + H(+). The enzyme catalyses alpha-ribazole 5'-phosphate + adenosylcob(III)inamide-GDP = adenosylcob(III)alamin 5'-phosphate + GMP + H(+). Its pathway is cofactor biosynthesis; adenosylcobalamin biosynthesis; adenosylcobalamin from cob(II)yrinate a,c-diamide: step 7/7. Its function is as follows. Joins adenosylcobinamide-GDP and alpha-ribazole to generate adenosylcobalamin (Ado-cobalamin). Also synthesizes adenosylcobalamin 5'-phosphate from adenosylcobinamide-GDP and alpha-ribazole 5'-phosphate. This chain is Adenosylcobinamide-GDP ribazoletransferase, found in Corynebacterium glutamicum (strain ATCC 13032 / DSM 20300 / JCM 1318 / BCRC 11384 / CCUG 27702 / LMG 3730 / NBRC 12168 / NCIMB 10025 / NRRL B-2784 / 534).